Reading from the N-terminus, the 170-residue chain is Large ribosomal subunit protein uL16 (170 aa).

It belongs to the universal ribosomal protein uL16 family.

This Methanoculleus marisnigri (strain ATCC 35101 / DSM 1498 / JR1) protein is Large ribosomal subunit protein uL16.